The sequence spans 162 residues: Shikimate kinase (162 aa).

Residue 10–15 (GAGKST) participates in ATP binding. Position 14 (serine 14) interacts with Mg(2+). Substrate-binding residues include aspartate 28, arginine 52, and glycine 73. Arginine 113 contributes to the ATP binding site. Arginine 129 serves as a coordination point for substrate.

This sequence belongs to the shikimate kinase family. As to quaternary structure, monomer. Requires Mg(2+) as cofactor.

It localises to the cytoplasm. It carries out the reaction shikimate + ATP = 3-phosphoshikimate + ADP + H(+). It functions in the pathway metabolic intermediate biosynthesis; chorismate biosynthesis; chorismate from D-erythrose 4-phosphate and phosphoenolpyruvate: step 5/7. Its function is as follows. Catalyzes the specific phosphorylation of the 3-hydroxyl group of shikimic acid using ATP as a cosubstrate. This Lactococcus lactis subsp. cremoris (strain SK11) protein is Shikimate kinase.